A 461-amino-acid polypeptide reads, in one-letter code: Fumarate hydratase class II (461 aa).

Substrate contacts are provided by residues 98 to 100 (SGT), 129 to 132 (HPND), 139 to 141 (SSN), and Thr-187. Residues 120-140 (SKKGGKSPVHPNDHVNKGQSS) are disordered. His-188 acts as the Proton donor/acceptor in catalysis. Residue Ser-318 is part of the active site. Residues Ser-319 and 324–326 (KVN) each bind substrate.

This sequence belongs to the class-II fumarase/aspartase family. Fumarase subfamily. Homotetramer.

It is found in the cytoplasm. The catalysed reaction is (S)-malate = fumarate + H2O. It participates in carbohydrate metabolism; tricarboxylic acid cycle; (S)-malate from fumarate: step 1/1. Functionally, involved in the TCA cycle. Catalyzes the stereospecific interconversion of fumarate to L-malate. This chain is Fumarate hydratase class II, found in Rickettsia felis (strain ATCC VR-1525 / URRWXCal2) (Rickettsia azadi).